A 394-amino-acid polypeptide reads, in one-letter code: Phosphoglycerate kinase (394 aa).

Substrate-binding positions include 21-23 (DFN), arginine 36, 59-62 (HLGR), arginine 118, and arginine 151. Serine 183 is modified (phosphoserine). ATP is bound by residues lysine 201 and glycine 292. Threonine 299 is subject to Phosphothreonine. ATP-binding positions include glutamate 323 and 350–353 (GGDS).

The protein belongs to the phosphoglycerate kinase family. Monomer.

Its subcellular location is the cytoplasm. The catalysed reaction is (2R)-3-phosphoglycerate + ATP = (2R)-3-phospho-glyceroyl phosphate + ADP. It participates in carbohydrate degradation; glycolysis; pyruvate from D-glyceraldehyde 3-phosphate: step 2/5. This is Phosphoglycerate kinase from Bacillus cereus (strain Q1).